We begin with the raw amino-acid sequence, 287 residues long: Phosphatidylserine decarboxylase proenzyme (287 aa).

Residues D89, H146, and S252 each act as charge relay system; for autoendoproteolytic cleavage activity in the active site. S252 functions as the Schiff-base intermediate with substrate; via pyruvic acid; for decarboxylase activity in the catalytic mechanism. S252 is subject to Pyruvic acid (Ser); by autocatalysis.

It belongs to the phosphatidylserine decarboxylase family. PSD-B subfamily. Prokaryotic type I sub-subfamily. As to quaternary structure, heterodimer of a large membrane-associated beta subunit and a small pyruvoyl-containing alpha subunit. Requires pyruvate as cofactor. Is synthesized initially as an inactive proenzyme. Formation of the active enzyme involves a self-maturation process in which the active site pyruvoyl group is generated from an internal serine residue via an autocatalytic post-translational modification. Two non-identical subunits are generated from the proenzyme in this reaction, and the pyruvate is formed at the N-terminus of the alpha chain, which is derived from the carboxyl end of the proenzyme. The autoendoproteolytic cleavage occurs by a canonical serine protease mechanism, in which the side chain hydroxyl group of the serine supplies its oxygen atom to form the C-terminus of the beta chain, while the remainder of the serine residue undergoes an oxidative deamination to produce ammonia and the pyruvoyl prosthetic group on the alpha chain. During this reaction, the Ser that is part of the protease active site of the proenzyme becomes the pyruvoyl prosthetic group, which constitutes an essential element of the active site of the mature decarboxylase.

Its subcellular location is the cell membrane. The enzyme catalyses a 1,2-diacyl-sn-glycero-3-phospho-L-serine + H(+) = a 1,2-diacyl-sn-glycero-3-phosphoethanolamine + CO2. The protein operates within phospholipid metabolism; phosphatidylethanolamine biosynthesis; phosphatidylethanolamine from CDP-diacylglycerol: step 2/2. Functionally, catalyzes the formation of phosphatidylethanolamine (PtdEtn) from phosphatidylserine (PtdSer). The sequence is that of Phosphatidylserine decarboxylase proenzyme from Shewanella amazonensis (strain ATCC BAA-1098 / SB2B).